The chain runs to 339 residues: 2-deoxy-scyllo-inosamine dehydrogenase (339 aa).

7 residues coordinate Zn(2+): cysteine 37, histidine 59, cysteine 88, cysteine 91, cysteine 94, cysteine 102, and glutamate 143.

It belongs to the zinc-containing alcohol dehydrogenase family. DOIA dehydrogenase subfamily. Zn(2+) serves as cofactor.

It catalyses the reaction 2-deoxy-scyllo-inosamine + NADP(+) = 3-amino-2,3-dideoxy-scyllo-inosose + NADPH + H(+). It carries out the reaction 2-deoxy-scyllo-inosamine + NAD(+) = 3-amino-2,3-dideoxy-scyllo-inosose + NADH + H(+). It functions in the pathway metabolic intermediate biosynthesis; 2-deoxystreptamine biosynthesis; 2-deoxystreptamine from D-glucose 6-phosphate: step 3/4. The protein operates within antibiotic biosynthesis; paromomycin biosynthesis. Catalyzes the oxidation of 2-deoxy-scyllo-inosamine (DOIA) with NAD(+) or NADP(+), forming 3-amino-2,3-dideoxy-scyllo-inosose (amino-DOI). This chain is 2-deoxy-scyllo-inosamine dehydrogenase (parE), found in Streptomyces paromomycinus (Streptomyces rimosus subsp. paromomycinus).